Reading from the N-terminus, the 269-residue chain is Tryptophan synthase alpha chain (269 aa).

Residues Glu-49 and Asp-60 each act as proton acceptor in the active site.

Belongs to the TrpA family. Tetramer of two alpha and two beta chains.

The catalysed reaction is (1S,2R)-1-C-(indol-3-yl)glycerol 3-phosphate + L-serine = D-glyceraldehyde 3-phosphate + L-tryptophan + H2O. It participates in amino-acid biosynthesis; L-tryptophan biosynthesis; L-tryptophan from chorismate: step 5/5. Functionally, the alpha subunit is responsible for the aldol cleavage of indoleglycerol phosphate to indole and glyceraldehyde 3-phosphate. The polypeptide is Tryptophan synthase alpha chain (Proteus mirabilis (strain HI4320)).